The primary structure comprises 700 residues: Polyribonucleotide nucleotidyltransferase (700 aa).

The Mg(2+) site is built by Asp-487 and Asp-493. The KH domain occupies Pro-554–Ile-613. Residues Gly-623–Lys-691 form the S1 motif domain.

Belongs to the polyribonucleotide nucleotidyltransferase family. Component of the RNA degradosome, which is a multiprotein complex involved in RNA processing and mRNA degradation. Mg(2+) is required as a cofactor.

The protein localises to the cytoplasm. It catalyses the reaction RNA(n+1) + phosphate = RNA(n) + a ribonucleoside 5'-diphosphate. Involved in mRNA degradation. Catalyzes the phosphorolysis of single-stranded polyribonucleotides processively in the 3'- to 5'-direction. The polypeptide is Polyribonucleotide nucleotidyltransferase (Xylella fastidiosa (strain M12)).